The primary structure comprises 491 residues: Protein DETOXIFICATION 56 (491 aa).

Helical transmembrane passes span leucine 39–leucine 59, leucine 72–methionine 92, threonine 111–leucine 131, leucine 154–leucine 174, leucine 181–leucine 201, methionine 212–valine 232, glycine 261–threonine 281, valine 291–leucine 311, tyrosine 336–phenylalanine 356, methionine 379–valine 399, methionine 409–phenylalanine 429, and phenylalanine 438–alanine 458.

Belongs to the multi antimicrobial extrusion (MATE) (TC 2.A.66.1) family. Interacts with BCA4 and HT1. Preferentially expressed in guard cells.

The protein localises to the cell membrane. Its function is as follows. Could function as a HCO(3)(-) -sensing component in the CO(2) signaling pathway in guard cells. Acts as an upstream repressor of HT1. Plays a role in stomatal response to CO(2). The polypeptide is Protein DETOXIFICATION 56 (Arabidopsis thaliana (Mouse-ear cress)).